Here is a 440-residue protein sequence, read N- to C-terminus: UDP-N-acetylmuramoylalanine--D-glutamate ligase (440 aa).

115–121 (GSNGKST) is a binding site for ATP.

This sequence belongs to the MurCDEF family.

The protein resides in the cytoplasm. The catalysed reaction is UDP-N-acetyl-alpha-D-muramoyl-L-alanine + D-glutamate + ATP = UDP-N-acetyl-alpha-D-muramoyl-L-alanyl-D-glutamate + ADP + phosphate + H(+). The protein operates within cell wall biogenesis; peptidoglycan biosynthesis. Its function is as follows. Cell wall formation. Catalyzes the addition of glutamate to the nucleotide precursor UDP-N-acetylmuramoyl-L-alanine (UMA). This is UDP-N-acetylmuramoylalanine--D-glutamate ligase from Vibrio cholerae serotype O1 (strain ATCC 39541 / Classical Ogawa 395 / O395).